Here is a 154-residue protein sequence, read N- to C-terminus: Aminoalkylphosphonate N-acetyltransferase (154 aa).

Residues 14-154 (CELRHATTED…QSHFRFTKAL (141 aa)) form the N-acetyltransferase domain.

As to quaternary structure, homodimer. A divalent metal cation is required as a cofactor.

The catalysed reaction is aminomethylphosphonate + acetyl-CoA = 2-N-acetamidomethylphosphonate + CoA. It carries out the reaction (S)-1-aminoethylphosphonate + acetyl-CoA = [(1S)-1-acetamidoethyl]phosphonate + CoA. Aminoalkylphosphonate N-acetyltransferase which is able to acetylate a range of aminoalkylphosphonic acids, including (S)-1-aminoethylphosphonate ((S)-1AEP) and 2-aminoethylphosphonate, using acetyl-CoA as acetyl donor. Its physiological role in S.typhimurium is unclear. However, by acetylating (S)-1AEP, PhnO would protect against the deleterious effects of (S)-1AEP, a structural analog of D-alanine that has antibacterial properties. This Salmonella typhimurium (strain LT2 / SGSC1412 / ATCC 700720) protein is Aminoalkylphosphonate N-acetyltransferase.